Reading from the N-terminus, the 243-residue chain is Protein-L-isoaspartate O-methyltransferase (243 aa).

Residue S87 is part of the active site.

Belongs to the methyltransferase superfamily. L-isoaspartyl/D-aspartyl protein methyltransferase family.

It localises to the cytoplasm. The catalysed reaction is [protein]-L-isoaspartate + S-adenosyl-L-methionine = [protein]-L-isoaspartate alpha-methyl ester + S-adenosyl-L-homocysteine. Functionally, catalyzes the methyl esterification of L-isoaspartyl residues in peptides and proteins that result from spontaneous decomposition of normal L-aspartyl and L-asparaginyl residues. It plays a role in the repair and/or degradation of damaged proteins. This Methanosarcina mazei (strain ATCC BAA-159 / DSM 3647 / Goe1 / Go1 / JCM 11833 / OCM 88) (Methanosarcina frisia) protein is Protein-L-isoaspartate O-methyltransferase.